We begin with the raw amino-acid sequence, 337 residues long: Ketol-acid reductoisomerase (NADP(+)) (337 aa).

The 181-residue stretch at 3-183 (VEMFYDDDAD…GGTRAGVIKT (181 aa)) folds into the KARI N-terminal Rossmann domain. NADP(+)-binding positions include 26 to 29 (YGSQ), Lys-49, Ser-52, Ser-54, and 84 to 87 (DTAQ). Residue His-109 is part of the active site. Gly-135 lines the NADP(+) pocket. Residues 184–329 (TFKEETETDL…KKLRDLMSWV (146 aa)) enclose the KARI C-terminal knotted domain. Residues Asp-192, Glu-196, Glu-228, and Glu-232 each contribute to the Mg(2+) site. Ser-253 lines the substrate pocket.

This sequence belongs to the ketol-acid reductoisomerase family. It depends on Mg(2+) as a cofactor.

It catalyses the reaction (2R)-2,3-dihydroxy-3-methylbutanoate + NADP(+) = (2S)-2-acetolactate + NADPH + H(+). It carries out the reaction (2R,3R)-2,3-dihydroxy-3-methylpentanoate + NADP(+) = (S)-2-ethyl-2-hydroxy-3-oxobutanoate + NADPH + H(+). It participates in amino-acid biosynthesis; L-isoleucine biosynthesis; L-isoleucine from 2-oxobutanoate: step 2/4. Its pathway is amino-acid biosynthesis; L-valine biosynthesis; L-valine from pyruvate: step 2/4. Involved in the biosynthesis of branched-chain amino acids (BCAA). Catalyzes an alkyl-migration followed by a ketol-acid reduction of (S)-2-acetolactate (S2AL) to yield (R)-2,3-dihydroxy-isovalerate. In the isomerase reaction, S2AL is rearranged via a Mg-dependent methyl migration to produce 3-hydroxy-3-methyl-2-ketobutyrate (HMKB). In the reductase reaction, this 2-ketoacid undergoes a metal-dependent reduction by NADPH to yield (R)-2,3-dihydroxy-isovalerate. This Rhodococcus erythropolis (strain PR4 / NBRC 100887) protein is Ketol-acid reductoisomerase (NADP(+)).